Reading from the N-terminus, the 51-residue chain is Gene 62 protein (51 aa).

In Mycobacterium (Mycobacteriophage L5), this protein is Gene 62 protein (62).